We begin with the raw amino-acid sequence, 408 residues long: LIN1-like protein (408 aa).

Residues 1-161 (MKRTLRNPGN…SVPSSPKRMS (161 aa)) form a disordered region. The span at 41-52 (YYESESEEDEDQ) shows a compositional bias: acidic residues. Composition is skewed to basic and acidic residues over residues 53–62 (ILNKEKKEGQ), 73–109 (DEKRTLPNDEAQKRRDFIENGDAERLAHKGLRNKEVL), and 119–129 (NGKYSKLRYED). Positions 344-402 (SSQYNFKWEFDDKTYGPYTASQIQAWSNEGYFTDAKHAAFIQLANMDEWMYPNNICFCD) constitute a GYF domain.

Belongs to the LIN1 family.

The protein is LIN1-like protein of Schizosaccharomyces pombe (strain 972 / ATCC 24843) (Fission yeast).